A 475-amino-acid polypeptide reads, in one-letter code: UDP-N-acetylmuramate--L-alanine ligase (475 aa).

118 to 124 (GTHGKTT) lines the ATP pocket.

This sequence belongs to the MurCDEF family.

It localises to the cytoplasm. It catalyses the reaction UDP-N-acetyl-alpha-D-muramate + L-alanine + ATP = UDP-N-acetyl-alpha-D-muramoyl-L-alanine + ADP + phosphate + H(+). It functions in the pathway cell wall biogenesis; peptidoglycan biosynthesis. Its function is as follows. Cell wall formation. The chain is UDP-N-acetylmuramate--L-alanine ligase from Thermosynechococcus vestitus (strain NIES-2133 / IAM M-273 / BP-1).